Here is a 117-residue protein sequence, read N- to C-terminus: Peptidyl-tRNA hydrolase (117 aa).

The protein belongs to the PTH2 family.

It localises to the cytoplasm. The catalysed reaction is an N-acyl-L-alpha-aminoacyl-tRNA + H2O = an N-acyl-L-amino acid + a tRNA + H(+). The natural substrate for this enzyme may be peptidyl-tRNAs which drop off the ribosome during protein synthesis. This chain is Peptidyl-tRNA hydrolase, found in Metallosphaera sedula (strain ATCC 51363 / DSM 5348 / JCM 9185 / NBRC 15509 / TH2).